Here is a 242-residue protein sequence, read N- to C-terminus: DnaJ homolog subfamily B member 6 (242 aa).

The J domain occupies 2–69 (VDYYEVLGVQ…KKRDIYDRYG (68 aa)). An interaction with HSP70 region spans residues 2–146 (VDYYEVLGVQ…TGSFFSTFSG (145 aa)). An interaction with KRT18 region spans residues 119-242 (FEDFFGHRRG…KEQLLRLDNK (124 aa)). The residue at position 135 (Arg-135) is an Omega-N-methylarginine.

As to quaternary structure, homooligomer. Interacts with BAG3, HSPB8 and STUB1. Interacts with ALKBH1. Interacts with HSP70, KRT18 and PTTG. Expressed in all tissues examined with highest expression in brain and retina and lower levels observed in testis, spleen, heart, liver and kidney.

The protein localises to the cytoplasm. It localises to the perinuclear region. It is found in the nucleus. The protein resides in the myofibril. Its subcellular location is the sarcomere. The protein localises to the z line. In terms of biological role, has a stimulatory effect on the ATPase activity of HSP70 in a dose-dependent and time-dependent manner and hence acts as a co-chaperone of HSP70. Plays an indispensable role in the organization of KRT8/KRT18 filaments. Acts as an endogenous molecular chaperone for neuronal proteins including huntingtin. Suppresses aggregation and toxicity of polyglutamine-containing, aggregation-prone proteins. Also reduces cellular toxicity and caspase-3 activity. The protein is DnaJ homolog subfamily B member 6 (DNAJB6) of Bos taurus (Bovine).